A 744-amino-acid chain; its full sequence is 4'-phospho-dehydrooxetanocin synthase (744 aa).

One can recognise a B12-binding domain in the interval 119–259 (TVTLVNLCVI…KMLKKELKLD (141 aa)). Cob(II)alamin is bound by residues Arg-135, Ser-139, Ser-184, Gly-241, Glu-242, and Glu-308. Residues 299–545 (SKFRGALTLE…IVSYMLASME (247 aa)) form the Radical SAM core domain. [4Fe-4S] cluster-binding residues include Cys-313, Cys-318, and Cys-321. 5 residues coordinate cob(II)alamin: Pro-322, His-325, Lys-326, Ala-361, and Glu-363. S-adenosyl-L-methionine contacts are provided by Glu-436 and Glu-545.

The protein belongs to the radical SAM superfamily. The cofactor is [4Fe-4S] cluster. Cob(II)alamin is required as a cofactor.

The enzyme catalyses dAMP + S-adenosyl-L-methionine = 4'-phospho-dehydrooxetanocin + 5'-deoxyadenosine + L-methionine + H(+). The catalysed reaction is AH2 + 2 S-adenosyl-L-methionine = 2 5'-deoxyadenosin-5'-yl radical + 2 L-methionine + A + 2 H(+). It carries out the reaction 2 5'-deoxyadenosin-5'-yl radical + 2 dAMP + A = 2 4'-phospho-dehydrooxetanocin + 2 5'-deoxyadenosine + AH2. Its activity is regulated as follows. Requires OxsA for the oxidative ring contraction activity. Activation of OxsB requires its direct interaction with OxsA and is independent of OxsA phosphohydrolase activity. In contrast to ring contraction, methylation does not require the presence of OxsA. Functionally, isomerase involved in the biosynthesis of oxetanocin A (OXT-A), a nucleoside analog with antitumor, antiviral and antibacterial properties. Catalyzes an oxidative ring contraction of dAMP, forming an oxetane aldehyde. In addition, shows methyltransferase activity in vitro and is able to catalyze the radical mediated, stereoselective C2'-methylation of dAMP to form methylated 2'-dAMP. Also catalyzes the demethylation of S-adenosyl-L-methionine (SAM) to S-adenosyl-L-homocysteine (SAH). This Priestia megaterium (Bacillus megaterium) protein is 4'-phospho-dehydrooxetanocin synthase.